Consider the following 328-residue polypeptide: MTNNSTCIQPSVISTTALPVTYIFLFIIGLFGNSLAQWVFLTKIGKKTSTHIYLANLVTANLLVCTAMPFMGIYFLRGFYWKYQSVQCRLVNFLGTLSMHVSMFVSLLILSWIAISRYATLMKKESKQEATSCYERMFYGHVLKRFRQPNFARTMCIYIWGVVLVIIIPVTLYYSVVEATEEGQSQCYNRQMELGARPSQIAGLIGTTFIGFSFLVVVTSYYSLVSHLRRVRTCTSITEKDLTYRSVKRHLLIIQVLLVVCFLPYSIFKPIFYVLHQREGDCQQLNYLIEAKNILTCLASARSSTDPIIFLLLDKTFKKTLYGLLTKS.

At 1 to 11 (MTNNSTCIQPS) the chain is on the extracellular side. Asparagine 3 and asparagine 4 each carry an N-linked (GlcNAc...) asparagine glycan. A helical transmembrane segment spans residues 12–32 (VISTTALPVTYIFLFIIGLFG). Over 33–55 (NSLAQWVFLTKIGKKTSTHIYLA) the chain is Cytoplasmic. Residues 56-76 (NLVTANLLVCTAMPFMGIYFL) form a helical membrane-spanning segment. Residues 77-92 (RGFYWKYQSVQCRLVN) lie on the Extracellular side of the membrane. A helical transmembrane segment spans residues 93-115 (FLGTLSMHVSMFVSLLILSWIAI). Topologically, residues 116–156 (SRYATLMKKESKQEATSCYERMFYGHVLKRFRQPNFARTMC) are cytoplasmic. Residues 157–177 (IYIWGVVLVIIIPVTLYYSVV) traverse the membrane as a helical segment. Over 178–197 (EATEEGQSQCYNRQMELGAR) the chain is Extracellular. A helical membrane pass occupies residues 198–218 (PSQIAGLIGTTFIGFSFLVVV). Over 219-251 (TSYYSLVSHLRRVRTCTSITEKDLTYRSVKRHL) the chain is Cytoplasmic. Residues 252–272 (LIIQVLLVVCFLPYSIFKPIF) form a helical membrane-spanning segment. At 273–328 (YVLHQREGDCQQLNYLIEAKNILTCLASARSSTDPIIFLLLDKTFKKTLYGLLTKS) the chain is on the extracellular side.

It belongs to the G-protein coupled receptor 1 family.

The protein resides in the cell membrane. Its function is as follows. Orphan receptor. The sequence is that of Probable G-protein coupled receptor 82 (Gpr82) from Mus musculus (Mouse).